Consider the following 148-residue polypeptide: Aspartate 1-decarboxylase (148 aa).

Serine 25 (schiff-base intermediate with substrate; via pyruvic acid) is an active-site residue. Residue serine 25 is modified to Pyruvic acid (Ser). Threonine 57 contributes to the substrate binding site. The active-site Proton donor is the tyrosine 58. 73-75 (GAA) contacts substrate.

It belongs to the PanD family. As to quaternary structure, heterooctamer of four alpha and four beta subunits. Pyruvate serves as cofactor. Post-translationally, is synthesized initially as an inactive proenzyme, which is activated by self-cleavage at a specific serine bond to produce a beta-subunit with a hydroxyl group at its C-terminus and an alpha-subunit with a pyruvoyl group at its N-terminus.

Its subcellular location is the cytoplasm. The enzyme catalyses L-aspartate + H(+) = beta-alanine + CO2. The protein operates within cofactor biosynthesis; (R)-pantothenate biosynthesis; beta-alanine from L-aspartate: step 1/1. Its function is as follows. Catalyzes the pyruvoyl-dependent decarboxylation of aspartate to produce beta-alanine. This Rhodococcus jostii (strain RHA1) protein is Aspartate 1-decarboxylase.